Here is a 360-residue protein sequence, read N- to C-terminus: uncharacterized protein (360 aa).

This is an uncharacterized protein from Escherichia coli (strain UTI89 / UPEC).